The chain runs to 166 residues: Methylmalonyl-CoA epimerase, mitochondrial (166 aa).

Residues 1 to 23 constitute a mitochondrion transit peptide; it reads MFKQLIKTTLTNSRSFSTNTGSG. Positions 37 to 166 constitute a VOC domain; that stretch reads KLNHVAIATP…NGVLVELEEK (130 aa). Residues His-40, His-112, and Glu-162 each contribute to the Co(2+) site.

It belongs to the methylmalonyl-CoA epimerase family.

Its subcellular location is the mitochondrion. It carries out the reaction (R)-methylmalonyl-CoA = (S)-methylmalonyl-CoA. Functionally, methylmalonyl-CoA epimerase involved in propionyl-CoA metabolism. This Dictyostelium discoideum (Social amoeba) protein is Methylmalonyl-CoA epimerase, mitochondrial (mcee).